The chain runs to 134 residues: Snaclec alboaggregin-A subunit alpha' (134 aa).

In terms of domain architecture, C-type lectin spans 1–134; that stretch reads DFHCLPGWSA…NPFVCKFPPQ (134 aa). Intrachain disulfides connect Cys4-Cys15, Cys32-Cys129, and Cys104-Cys121.

This sequence belongs to the snaclec family. In terms of assembly, heterotetramer of the subunits alpha, alpha', beta and beta'; disulfide-linked. Expressed by the venom gland.

The protein resides in the secreted. In terms of biological role, potent platelet activator that aggregates platelets via both GPIbalpha (GP1BA) and GPVI (GP6). Induces a tyrosine phosphorylation profile in platelets that resembles this produced by collagen, involving the time dependent tyrosine phosphorylation of Fc receptor gamma chain (FCGR1A), phospholipase Cgamma2 (PLCG2), and LAT. The sequence is that of Snaclec alboaggregin-A subunit alpha' from Trimeresurus albolabris (White-lipped pit viper).